The following is a 144-amino-acid chain: Ninjurin-2 (144 aa).

Residues 1–62 (MESDREIIHL…KSVLEQGPFS (62 aa)) lie on the Extracellular side of the membrane. The segment at 27–39 (NHYATKKSVAESM) is helix alpha1. Residues 40 to 59 (LDVALFMSNAMRLKSVLEQG) form a helix alpha2 region. The helical transmembrane segment at 63 to 94 (QYYTTLLTLISASLLLQVVIGILLVVIARLNL) threads the bilayer. Topologically, residues 95–98 (NEVE) are cytoplasmic. Residues 99–128 (NQWRLNQLNNAATTLVFITVVINIFITAFG) traverse the membrane as a helical segment. Cholesterol is bound at residue Q105. Residues 129-144 (AHKTGSVAARTSSNPI) are Extracellular-facing.

It belongs to the ninjurin family. Homooligomer; in response to stimuli, homooligomerizes into filaments. In contrast to NINJ1, the filament is curved toward the intracellular space, preventing its circularization on a relatively flat membrane to mediate plasma membrane rupture: curvature is caused by cholesterol-binding at the cytoplasmic leaflet.

The protein localises to the cell membrane. Functionally, its role in unclear. In contrast to NINJ1 paralog, does not mediate plasma membrane rupture (cytolysis) downstream of necroptotic and pyroptotic programmed cell death. While it is able to oligomerize and form filaments, filaments are curved toward the intracellular space, preventing circularization to mediate plasma membrane rupture. May act as a homophilic transmembrane adhesion molecule involved in nerve regeneration. Promotes axonal growth. In Rattus norvegicus (Rat), this protein is Ninjurin-2 (Ninj2).